Reading from the N-terminus, the 439-residue chain is Signal recognition particle 54 kDa protein (439 aa).

GTP-binding positions include 104 to 111, 184 to 188, and 242 to 245; these read GLQGSGKT, DTAGR, and SKLD.

The protein belongs to the GTP-binding SRP family. SRP54 subfamily. In terms of assembly, part of the signal recognition particle protein translocation system, which is composed of SRP and FtsY. Archaeal SRP consists of a 7S RNA molecule of 300 nucleotides and two protein subunits: SRP54 and SRP19.

It is found in the cytoplasm. The catalysed reaction is GTP + H2O = GDP + phosphate + H(+). Functionally, involved in targeting and insertion of nascent membrane proteins into the cytoplasmic membrane. Binds to the hydrophobic signal sequence of the ribosome-nascent chain (RNC) as it emerges from the ribosomes. The SRP-RNC complex is then targeted to the cytoplasmic membrane where it interacts with the SRP receptor FtsY. The chain is Signal recognition particle 54 kDa protein from Methanococcoides burtonii (strain DSM 6242 / NBRC 107633 / OCM 468 / ACE-M).